A 414-amino-acid polypeptide reads, in one-letter code: Putative ankyrin repeat protein BB_B28 (414 aa).

ANK repeat units lie at residues 326–355 (NGNP…NINL) and 359–389 (NSQT…NPNI).

This is Putative ankyrin repeat protein BB_B28 from Borreliella burgdorferi (strain ATCC 35210 / DSM 4680 / CIP 102532 / B31) (Borrelia burgdorferi).